Reading from the N-terminus, the 273-residue chain is Cyclic di-AMP synthase CdaA (273 aa).

Transmembrane regions (helical) follow at residues 12-32 (LGNA…IMVI), 40-60 (LLKG…LGLS), and 61-81 (TLQW…IIIF). The DAC domain maps to 82–242 (QPELRRALEQ…NGDLHRELTE (161 aa)).

It belongs to the adenylate cyclase family. DacA/CdaA subfamily. In terms of assembly, probably a homodimer. Interacts with CdaR. May interact with GlmM.

It is found in the cell membrane. It catalyses the reaction 2 ATP = 3',3'-c-di-AMP + 2 diphosphate. With respect to regulation, DAC activity is stimulated about 20-fold in E.coli by coexpression with CdaR. Its function is as follows. One of 3 paralogous diadenylate cyclases (DAC) in this bacteria, catalyzing the condensation of 2 ATP molecules into cyclic di-AMP (c-di-AMP). Upon expression in E.coli leads to c-di-AMP synthesis. Probably the main producer of c-di-AMP for the cell; is probably implicated in control of peptidoglycan synthesis. In B.subtilis c-di-AMP is a second messenger that mediates growth, DNA repair and cell wall homeostasis; it is toxic when present in excess. This Bacillus subtilis (strain 168) protein is Cyclic di-AMP synthase CdaA.